A 215-amino-acid polypeptide reads, in one-letter code: Pyrrolidone-carboxylate peptidase (215 aa).

Active-site residues include E80, C143, and H167.

This sequence belongs to the peptidase C15 family. In terms of assembly, homotetramer.

The protein localises to the cytoplasm. The enzyme catalyses Release of an N-terminal pyroglutamyl group from a polypeptide, the second amino acid generally not being Pro.. Removes 5-oxoproline from various penultimate amino acid residues except L-proline. The protein is Pyrrolidone-carboxylate peptidase of Yersinia pestis bv. Antiqua (strain Antiqua).